Reading from the N-terminus, the 366-residue chain is 5-hydroxytryptamine receptor 1F (366 aa).

Topologically, residues 1-24 (MDFLNSSDQNLTSEELLHRMPSKI) are extracellular. Asparagine 5 and asparagine 10 each carry an N-linked (GlcNAc...) asparagine glycan. Residues 25–49 (LVSLTLSGLALMTTTINSLVIAAII) form a helical membrane-spanning segment. Topologically, residues 50-59 (VTRKLHHPAN) are cytoplasmic. Residues 60–81 (YLICSLAVTDFLVAVLVMPFSI) form a helical membrane-spanning segment. The Extracellular segment spans residues 82 to 96 (VYIVRESWIMGQVLC). Cysteine 96 and cysteine 172 form a disulfide bridge. Residues 97–119 (DIWLSVDIICCTCSILHLSAIAL) form a helical membrane-spanning segment. The serotonin site is built by aspartate 103 and cysteine 107. The DRY motif; important for ligand-induced conformation changes signature appears at 120–122 (DRY). Residues 120–139 (DRYRAITDAVEYARKRTPKQ) are Cytoplasmic-facing. A helical membrane pass occupies residues 140–159 (AGIMITIVWIISVFISMPPL). At 160 to 178 (FWRHQGTSRDDECIIKHDH) the chain is on the extracellular side. A helical membrane pass occupies residues 179–202 (IVSTIYSTFGAFYIPLVLILILYY). Residues 203 to 291 (KIYKAAKTLY…KISGTRERKA (89 aa)) lie on the Cytoplasmic side of the membrane. The helical transmembrane segment at 292 to 315 (ATTLGLILGAFVICWLPFFVKELV) threads the bilayer. Over 316–327 (VNVCEKCKISEE) the chain is Extracellular. Residues 328–350 (MANFLAWLGYLNSLINPLIYTIF) form a helical membrane-spanning segment. The NPxxY motif; important for ligand-induced conformation changes and signaling signature appears at 343-347 (NPLIY). The Cytoplasmic segment spans residues 351–366 (NEDFKKAFQKLVRCQY).

It belongs to the G-protein coupled receptor 1 family.

Its subcellular location is the cell membrane. Functionally, G-protein coupled receptor for 5-hydroxytryptamine (serotonin). Also functions as a receptor for various alkaloids and psychoactive substances. Ligand binding causes a conformation change that triggers signaling via guanine nucleotide-binding proteins (G proteins) and modulates the activity of downstream effectors, such as adenylate cyclase. HTR1F is coupled to G(i)/G(o) G alpha proteins and mediates inhibitory neurotransmission by inhibiting adenylate cyclase activity. The sequence is that of 5-hydroxytryptamine receptor 1F (HTR1F) from Cavia porcellus (Guinea pig).